The sequence spans 195 residues: GTP-dependent dephospho-CoA kinase (195 aa).

Residues Asp49, Val50, Asp68, Glu127, and Asp150 each coordinate GTP.

The protein belongs to the GTP-dependent DPCK family.

The catalysed reaction is 3'-dephospho-CoA + GTP = GDP + CoA + H(+). Its pathway is cofactor biosynthesis; coenzyme A biosynthesis. In terms of biological role, catalyzes the GTP-dependent phosphorylation of the 3'-hydroxyl group of dephosphocoenzyme A to form coenzyme A (CoA). The chain is GTP-dependent dephospho-CoA kinase from Methanosarcina mazei (strain ATCC BAA-159 / DSM 3647 / Goe1 / Go1 / JCM 11833 / OCM 88) (Methanosarcina frisia).